We begin with the raw amino-acid sequence, 458 residues long: tRNA modification GTPase MnmE (458 aa).

The (6S)-5-formyl-5,6,7,8-tetrahydrofolate site is built by Arg22, Glu85, and Arg124. The region spanning 220 to 379 (GLATAIIGRP…LEEAISRLFF (160 aa)) is the TrmE-type G domain. Asn230 is a K(+) binding site. Residues 230-235 (NVGKSS), 249-255 (TDIPGTT), and 274-277 (DTAG) each bind GTP. Ser234 serves as a coordination point for Mg(2+). Positions 249, 251, and 254 each coordinate K(+). Thr255 is a binding site for Mg(2+). Lys458 contacts (6S)-5-formyl-5,6,7,8-tetrahydrofolate.

The protein belongs to the TRAFAC class TrmE-Era-EngA-EngB-Septin-like GTPase superfamily. TrmE GTPase family. Homodimer. Heterotetramer of two MnmE and two MnmG subunits. Requires K(+) as cofactor.

Its subcellular location is the cytoplasm. Exhibits a very high intrinsic GTPase hydrolysis rate. Involved in the addition of a carboxymethylaminomethyl (cmnm) group at the wobble position (U34) of certain tRNAs, forming tRNA-cmnm(5)s(2)U34. The polypeptide is tRNA modification GTPase MnmE (Shouchella clausii (strain KSM-K16) (Alkalihalobacillus clausii)).